Reading from the N-terminus, the 305-residue chain is MELHYLAKKSNQADLCDARDWSSRGLPGDQADTAATRAALCCQKQCASTPRATEMEGSKLSSSPASPSSSLQNSTLQPDAFPPGLLHSGNNQITAERKVCNCCSQELETSFTYVDKNINLEQRNRSSPSAKGHNHPGELGWENPNEWSQEAAISLISEEEDDTSSEATSSGKSIDYGFISAILFLVTGILLVIISYIVPREVTVDPNTVAAREMERLEKESARLGAHLDRCVIAGLCLLTLGGVILSCLLMMSMWKGELYRRNRFASSKESAKLYGSFNFRMKTSTNENTLELSLVEEDALAVQS.

Disordered regions lie at residues 52–88 (ATEMEGSKLSSSPASPSSSLQNSTLQPDAFPPGLLHS) and 123–143 (RNRSSPSAKGHNHPGELGWEN). Residues 58-78 (SKLSSSPASPSSSLQNSTLQP) are compositionally biased toward low complexity. A run of 2 helical transmembrane segments spans residues 178–198 (FISAILFLVTGILLVIISYIV) and 232–252 (VIAGLCLLTLGGVILSCLLMM).

This sequence belongs to the TMEM74 family. Expressed in heart, lung, and placenta.

The protein localises to the lysosome membrane. It localises to the cytoplasmic vesicle. The protein resides in the autophagosome membrane. Its function is as follows. Plays an essential role in autophagy. TMEM74-induced autophagy may involve PI3K signal transduction. This is Transmembrane protein 74 (TMEM74) from Homo sapiens (Human).